Here is an 874-residue protein sequence, read N- to C-terminus: Valine--tRNA ligase (874 aa).

Residues 1–10 (MTENSQQQPP) are compositionally biased toward polar residues. The tract at residues 1-23 (MTENSQQQPPASEPELPTQYAPA) is disordered. The short motif at 57 to 67 (PNVTGSLHLGH) is the 'HIGH' region element. The short motif at 531–535 (KMSKS) is the 'KMSKS' region element. An ATP-binding site is contributed by lysine 534. Residues 806-871 (IDIVAERKRL…ARIQAQLDRM (66 aa)) are a coiled coil.

It belongs to the class-I aminoacyl-tRNA synthetase family. ValS type 1 subfamily. As to quaternary structure, monomer.

The protein localises to the cytoplasm. The enzyme catalyses tRNA(Val) + L-valine + ATP = L-valyl-tRNA(Val) + AMP + diphosphate. Functionally, catalyzes the attachment of valine to tRNA(Val). As ValRS can inadvertently accommodate and process structurally similar amino acids such as threonine, to avoid such errors, it has a 'posttransfer' editing activity that hydrolyzes mischarged Thr-tRNA(Val) in a tRNA-dependent manner. The protein is Valine--tRNA ligase of Streptomyces avermitilis (strain ATCC 31267 / DSM 46492 / JCM 5070 / NBRC 14893 / NCIMB 12804 / NRRL 8165 / MA-4680).